Reading from the N-terminus, the 911-residue chain is DNA ligase 4 (911 aa).

ATP-binding residues include glutamate 271, threonine 272, lysine 273, leucine 274, arginine 278, glutamate 331, lysine 345, phenylalanine 367, glutamate 427, lysine 432, lysine 449, and lysine 451. Catalysis depends on lysine 273, which acts as the N6-AMP-lysine intermediate. Glutamate 331 provides a ligand contact to Mg(2+). Glutamate 427 is a Mg(2+) binding site. The tract at residues 610-620 is required for catalytic activity; the sequence is LATKHLHVGDD. 2 BRCT domains span residues 654 to 743 and 808 to 911; these read KVSN…PRFM and SPLS…QYLL.

The protein belongs to the ATP-dependent DNA ligase family. Interacts with XRCC4; the LIG4-XRCC4 subcomplex has a 1:2 stoichiometry and XRCC4 is required for LIG4 stability. Component of the core long-range non-homologous end joining (NHEJ) complex (also named DNA-PK complex) composed of PRKDC, LIG4, XRCC4, XRCC6/Ku70, XRCC5/Ku86 and NHEJ1/XLF. Additional component of the NHEJ complex includes PAXX. Following autophosphorylation, PRKDC dissociates from DNA, leading to formation of the short-range NHEJ complex, composed of LIG4, XRCC4, XRCC6/Ku70, XRCC5/Ku86 and NHEJ1/XLF. Interacts with DCLRE1C; the interaction is direct. Interacts with APLF. It depends on Mg(2+) as a cofactor.

Its subcellular location is the nucleus. The catalysed reaction is ATP + (deoxyribonucleotide)n-3'-hydroxyl + 5'-phospho-(deoxyribonucleotide)m = (deoxyribonucleotide)n+m + AMP + diphosphate.. Its function is as follows. DNA ligase involved in DNA non-homologous end joining (NHEJ); required for double-strand break (DSB) repair and V(D)J recombination. Catalyzes the NHEJ ligation step of the broken DNA during DSB repair by resealing the DNA breaks after the gap filling is completed. Joins single-strand breaks in a double-stranded polydeoxynucleotide in an ATP-dependent reaction. LIG4 is mechanistically flexible: it can ligate nicks as well as compatible DNA overhangs alone, while in the presence of XRCC4, it can ligate ends with 2-nucleotides (nt) microhomology and 1-nt gaps. Forms a subcomplex with XRCC4; the LIG4-XRCC4 subcomplex is responsible for the NHEJ ligation step and XRCC4 enhances the joining activity of LIG4. Binding of the LIG4-XRCC4 complex to DNA ends is dependent on the assembly of the DNA-dependent protein kinase complex DNA-PK to these DNA ends. LIG4 regulates nuclear localization of XRCC4. The polypeptide is DNA ligase 4 (Mus musculus (Mouse)).